A 61-amino-acid chain; its full sequence is Protein translocase subunit SecE (61 aa).

A helical transmembrane segment spans residues 39–59 (LGILVIGLVGMLIRIIGILML).

This sequence belongs to the SecE/SEC61-gamma family. As to quaternary structure, component of the Sec protein translocase complex. Heterotrimer consisting of SecY (alpha), SecG (beta) and SecE (gamma) subunits. The heterotrimers can form oligomers, although 1 heterotrimer is thought to be able to translocate proteins. Interacts with the ribosome. May interact with SecDF, and other proteins may be involved.

The protein localises to the cell membrane. Its function is as follows. Essential subunit of the Sec protein translocation channel SecYEG. Clamps together the 2 halves of SecY. May contact the channel plug during translocation. This chain is Protein translocase subunit SecE, found in Pyrococcus horikoshii (strain ATCC 700860 / DSM 12428 / JCM 9974 / NBRC 100139 / OT-3).